Consider the following 266-residue polypeptide: GATA-type zinc finger protein 1 (266 aa).

Disordered stretches follow at residues 1–31, 106–129, and 171–191; these read MEAA…KSRP, TQCP…PRKQ, and CSQK…SSEA. Positions 106-121 are enriched in polar residues; the sequence is TQCPNLEISSATSPAS. The GATA-type zinc finger occupies 197 to 221; that stretch reads CASCRTQRTPLWRDAEDGTPLCNAC.

As to expression, specifically expressed in adult testis and ovary. Expressed at high levels in the somatic cells of the developing gonads, including Leydig cells in the testes and granulosa cells in the ovaries.

The protein resides in the nucleus. Functionally, transcriptional regulator that plays a key role in germ cell development. Determines the oogenic fate by activating key genes for the oogenic program and meiotic prophase entry. Acts downstream of bone morphogenetic protein (BMP) by regulating expression of genes required for the oogenic programs, which are repressed by Polycomb activities in sexually uncommitted germ cells. Regulates expression of STRA8, a central downstream effector for the meiotic program. Acts independently of retinoic acid (RA). In males, not required for germ-cell sex determination, but required to allow the spermatogonia to efficiently accomplish the meiotic prophase. This chain is GATA-type zinc finger protein 1, found in Mus musculus (Mouse).